We begin with the raw amino-acid sequence, 170 residues long: Tubulin polymerization-promoting protein family member 2 (170 aa).

A disordered region spans residues 127 to 170; the sequence is TGTHKERFDESGKGKGIAGREEMTDNTGYVSGYKGSGTYDKKTK. A compositionally biased stretch (basic and acidic residues) spans 129-149; it reads THKERFDESGKGKGIAGREEM.

The protein belongs to the TPPP family. Expressed in spermatids. Detected in liver cancer (at protein level).

It is found in the cytoplasm. The protein localises to the cytosol. It localises to the cell projection. The protein resides in the cilium. Its subcellular location is the flagellum. Its function is as follows. Probable regulator of microtubule dynamics required for sperm motility. In contrast to other members of the family, has no microtubule bundling activity. The chain is Tubulin polymerization-promoting protein family member 2 from Homo sapiens (Human).